Here is a 524-residue protein sequence, read N- to C-terminus: Protein-export membrane protein SecD (524 aa).

A run of 6 helical transmembrane segments spans residues 10–30, 366–386, 389–409, 420–442, 465–485, and 487–507; these read VIFL…PTMG, KFDS…VVFI, GKPQ…YILL, DLSV…IIIA, FWVI…LAVL, and LGDL…GVLV.

Belongs to the SecD/SecF family. SecD subfamily. As to quaternary structure, part of the protein translocation apparatus. Forms a homodimer and complexes with SecF.

Its subcellular location is the cell membrane. Its function is as follows. Involved in protein export. This chain is Protein-export membrane protein SecD, found in Haloferax volcanii (strain ATCC 29605 / DSM 3757 / JCM 8879 / NBRC 14742 / NCIMB 2012 / VKM B-1768 / DS2) (Halobacterium volcanii).